Reading from the N-terminus, the 398-residue chain is Succinate--CoA ligase [ADP-forming] subunit beta (398 aa).

The ATP-grasp domain occupies Lys9 to Glu254. Residues Lys46, Gly53–Gly55, Glu109, Ala112, and Glu117 each bind ATP. Mg(2+)-binding residues include Asn209 and Asp223. Substrate is bound by residues Asn274 and Gly331–Met333.

It belongs to the succinate/malate CoA ligase beta subunit family. In terms of assembly, heterotetramer of two alpha and two beta subunits. Requires Mg(2+) as cofactor.

It catalyses the reaction succinate + ATP + CoA = succinyl-CoA + ADP + phosphate. The catalysed reaction is GTP + succinate + CoA = succinyl-CoA + GDP + phosphate. The protein operates within carbohydrate metabolism; tricarboxylic acid cycle; succinate from succinyl-CoA (ligase route): step 1/1. Its function is as follows. Succinyl-CoA synthetase functions in the citric acid cycle (TCA), coupling the hydrolysis of succinyl-CoA to the synthesis of either ATP or GTP and thus represents the only step of substrate-level phosphorylation in the TCA. The beta subunit provides nucleotide specificity of the enzyme and binds the substrate succinate, while the binding sites for coenzyme A and phosphate are found in the alpha subunit. This Sinorhizobium medicae (strain WSM419) (Ensifer medicae) protein is Succinate--CoA ligase [ADP-forming] subunit beta.